The chain runs to 368 residues: Chorismate synthase (368 aa).

NADP(+) is bound by residues Arg-48 and Arg-54. Residues 125–127, 238–239, Gly-278, 293–297, and Arg-319 each bind FMN; these read RSS, NA, and KPTSS.

Belongs to the chorismate synthase family. In terms of assembly, homotetramer. The cofactor is FMNH2.

The catalysed reaction is 5-O-(1-carboxyvinyl)-3-phosphoshikimate = chorismate + phosphate. It participates in metabolic intermediate biosynthesis; chorismate biosynthesis; chorismate from D-erythrose 4-phosphate and phosphoenolpyruvate: step 7/7. Its function is as follows. Catalyzes the anti-1,4-elimination of the C-3 phosphate and the C-6 proR hydrogen from 5-enolpyruvylshikimate-3-phosphate (EPSP) to yield chorismate, which is the branch point compound that serves as the starting substrate for the three terminal pathways of aromatic amino acid biosynthesis. This reaction introduces a second double bond into the aromatic ring system. The chain is Chorismate synthase from Methylibium petroleiphilum (strain ATCC BAA-1232 / LMG 22953 / PM1).